The sequence spans 236 residues: Probable ascorbate-specific transmembrane electron transporter 2 (236 aa).

Topologically, residues 1–11 are cytoplasmic; sequence MAAGLGVKAAP. A helical membrane pass occupies residues 12-32; the sequence is FTYVAHALAVAAAVMVLVWCI. The region spanning 15–219 is the Cytochrome b561 domain; sequence VAHALAVAAA…FGAAVVVAAV (205 aa). Residues 33–53 lie on the Extracellular side of the membrane; it reads SFRGGLAFEADNKNLIFNVHP. Residue His-52 coordinates heme b. Residues 54-74 form a helical membrane-spanning segment; sequence VLMLIGYIILGSEAIMIYKIF. 67–75 serves as a coordination point for L-ascorbate; the sequence is AIMIYKIFP. The Cytoplasmic portion of the chain corresponds to 75–84; that stretch reads PKLNHDTTKL. The chain crosses the membrane as a helical span at residues 85–105; it reads IHLILHAIAIVLGAVGIYCAF. Residues His-86 and His-120 each coordinate heme b. Over 106-122 the chain is Extracellular; the sequence is KFHNESGIANLYSLHSW. Monodehydro-L-ascorbate radical is bound at residue 116-125; it reads LYSLHSWLGI. A helical membrane pass occupies residues 123–143; sequence LGIGTISLYGIQWIFGFVAFF. Over 144-153 the chain is Cytoplasmic; the sequence is YPGAAPHVRR. Residues 154-174 traverse the membrane as a helical segment; sequence GALPWHVLFGLFVYVLTLATA. His-159 contacts heme b. Over 175 to 196 the chain is Extracellular; sequence ELGLLEKLTFLQSSGLDKYGAE. The helical transmembrane segment at 197 to 217 threads the bilayer; it reads AFLVNFTGLVVALFGAAVVVA. The Cytoplasmic portion of the chain corresponds to 218 to 236; it reads AVAPAHVEEPEGYAPIPVN.

It depends on heme b as a cofactor.

It localises to the membrane. Two-heme-containing cytochrome. Catalyzes ascorbate-dependent trans-membrane electron transfer by utilizing a concerted H(+)/e(-) transfer mechanism. The polypeptide is Probable ascorbate-specific transmembrane electron transporter 2 (Oryza sativa subsp. japonica (Rice)).